The sequence spans 357 residues: UDP-xylose transporter 3 (357 aa).

The next 10 helical transmembrane spans lie at 7 to 27 (FQLG…SIVI), 31 to 51 (ALIS…HLLV), 75 to 95 (VMGF…SLGF), 100 to 120 (FYQM…TLFF), 132 to 152 (LTIL…LNML), 154 to 174 (SVLS…TNTI), 194 to 214 (AITL…QNVF), 224 to 244 (FFIV…FLVI), 250 to 270 (VTYQ…GYVL), and 280 to 300 (ILGI…CSIE). Ser-334 bears the Phosphoserine mark.

The protein belongs to the TPT transporter family. TPT (TC 2.A.7.9) subfamily. In terms of tissue distribution, ubiquitous.

The protein localises to the golgi apparatus membrane. Functionally, nucleotide-sugar transporter that transports UDP-xylose and UMP in a strict counter-exchange mode. This chain is UDP-xylose transporter 3, found in Arabidopsis thaliana (Mouse-ear cress).